The sequence spans 291 residues: Protein US2 (291 aa).

Gly2 is modified (N-acetylglycine; by host). The interval 223–281 is disordered; it reads NKPRPASSRPHPATHPTQRPCFTCMGRPEIPDEPSWQTGDDDPQNPGPPLAVGDEWPPS.

It belongs to the herpesviridae HHV-1 US2 protein family. Interacts with host KRT18. Interacts with host MAP3K7; this interaction induces host NF-kappa-B pathway.

The protein resides in the virion. Its subcellular location is the host cytoplasm. The protein localises to the host cell surface. It localises to the host nucleus. Functionally, plays a role in the activation of the host NF-kappa-B pathway by interacting with and thus activating the component MAP3K7. This is Protein US2 from Human herpesvirus 2 (strain HG52) (HHV-2).